The sequence spans 79 residues: MILPIIEFCISNLASGSQKAMEILEKDPNLDIIEYSCLSYCTRCADTLFALVNGEFVSGETPEQLVENIYRHLEENPMF.

The protein belongs to the UPF0349 family.

The chain is UPF0349 protein GTNG_2908 from Geobacillus thermodenitrificans (strain NG80-2).